The chain runs to 461 residues: tRNA modification GTPase MnmE (461 aa).

Arginine 22, glutamate 87, and arginine 126 together coordinate (6S)-5-formyl-5,6,7,8-tetrahydrofolate. In terms of domain architecture, TrmE-type G spans 222 to 382; that stretch reads GLKTVIVGKP…LEETIFNMVV (161 aa). Asparagine 232 provides a ligand contact to K(+). GTP contacts are provided by residues 232–237, 251–257, and 276–279; these read NVGKSS, TDIPGTT, and DTAG. Serine 236 provides a ligand contact to Mg(2+). The K(+) site is built by threonine 251, isoleucine 253, and threonine 256. Position 257 (threonine 257) interacts with Mg(2+). Position 461 (lysine 461) interacts with (6S)-5-formyl-5,6,7,8-tetrahydrofolate.

Belongs to the TRAFAC class TrmE-Era-EngA-EngB-Septin-like GTPase superfamily. TrmE GTPase family. In terms of assembly, homodimer. Heterotetramer of two MnmE and two MnmG subunits. K(+) is required as a cofactor.

It localises to the cytoplasm. In terms of biological role, exhibits a very high intrinsic GTPase hydrolysis rate. Involved in the addition of a carboxymethylaminomethyl (cmnm) group at the wobble position (U34) of certain tRNAs, forming tRNA-cmnm(5)s(2)U34. The sequence is that of tRNA modification GTPase MnmE from Desulforamulus reducens (strain ATCC BAA-1160 / DSM 100696 / MI-1) (Desulfotomaculum reducens).